The sequence spans 627 residues: tRNA uridine 5-carboxymethylaminomethyl modification enzyme MnmG (627 aa).

Residue 14 to 19 coordinates FAD; it reads GAGHAG. NAD(+) is bound at residue 275 to 289; the sequence is GPRYCPSIEDKVVKF.

This sequence belongs to the MnmG family. As to quaternary structure, homodimer. Heterotetramer of two MnmE and two MnmG subunits. Requires FAD as cofactor.

Its subcellular location is the cytoplasm. In terms of biological role, NAD-binding protein involved in the addition of a carboxymethylaminomethyl (cmnm) group at the wobble position (U34) of certain tRNAs, forming tRNA-cmnm(5)s(2)U34. The chain is tRNA uridine 5-carboxymethylaminomethyl modification enzyme MnmG from Lachnoclostridium phytofermentans (strain ATCC 700394 / DSM 18823 / ISDg) (Clostridium phytofermentans).